Reading from the N-terminus, the 420-residue chain is Protein TabA (420 aa).

Lys57 is subject to N6-(pyridoxal phosphate)lysine.

Belongs to the Orn/Lys/Arg decarboxylase class-II family. Pyridoxal 5'-phosphate serves as cofactor.

Functionally, involved in tabtoxin production and pathogenicity. The chain is Protein TabA (tabA) from Pseudomonas amygdali pv. tabaci (Pseudomonas syringae pv. tabaci).